Consider the following 261-residue polypeptide: Nickel import ATP-binding protein NikD (261 aa).

One can recognise an ABC transporter domain in the interval 6-248; that stretch reads LRIEGLTIAT…PRHDATRALV (243 aa). ATP is bound at residue 41–48; the sequence is GASGSGKS.

This sequence belongs to the ABC transporter superfamily. Nickel importer (TC 3.A.1.5.3) family. In terms of assembly, the complex is composed of two ATP-binding proteins (NikD and NikE), two transmembrane proteins (NikB and NikC) and a solute-binding protein (NikA).

Its subcellular location is the cell inner membrane. The enzyme catalyses Ni(2+)(out) + ATP + H2O = Ni(2+)(in) + ADP + phosphate + H(+). Functionally, part of the ABC transporter complex NikABCDE involved in nickel import. Responsible for energy coupling to the transport system. This is Nickel import ATP-binding protein NikD from Rhodospirillum rubrum (strain ATCC 11170 / ATH 1.1.1 / DSM 467 / LMG 4362 / NCIMB 8255 / S1).